The sequence spans 392 residues: 2-oxoisovalerate dehydrogenase subunit beta, mitochondrial (392 aa).

The N-terminal 50 residues, 1–50 (MAVVAAAAGWLLRLRAAGAEGHWRRLPGAGLARGFLHPAATVEDAAQRRQ), are a transit peptide targeting the mitochondrion. Tyrosine 152 provides a ligand contact to thiamine diphosphate. The K(+) site is built by glycine 178, leucine 180, threonine 181, cysteine 228, and aspartate 231. Lysine 232 is subject to N6-acetyllysine. A K(+)-binding site is contributed by asparagine 233. Lysine 241 bears the N6-acetyllysine mark.

As to quaternary structure, heterotetramer of 2 alpha/BCKDHA and 2 beta chains/BCKDHB that forms the branched-chain alpha-keto acid decarboxylase (E1) component of the BCKD complex. The branched-chain alpha-ketoacid dehydrogenase is a large complex composed of three major building blocks E1, E2 and E3. It is organized around E2, a 24-meric cubic core composed of DBT, to which are associated 6 to 12 copies of E1, and approximately 6 copies of the dehydrogenase E3, a DLD dimer. Thiamine diphosphate serves as cofactor.

The protein resides in the mitochondrion matrix. The enzyme catalyses N(6)-[(R)-lipoyl]-L-lysyl-[protein] + 3-methyl-2-oxobutanoate + H(+) = N(6)-[(R)-S(8)-2-methylpropanoyldihydrolipoyl]-L-lysyl-[protein] + CO2. In terms of biological role, together with BCKDHA forms the heterotetrameric E1 subunit of the mitochondrial branched-chain alpha-ketoacid dehydrogenase (BCKD) complex. The BCKD complex catalyzes the multi-step oxidative decarboxylation of alpha-ketoacids derived from the branched-chain amino-acids valine, leucine and isoleucine producing CO2 and acyl-CoA which is subsequently utilized to produce energy. The E1 subunit catalyzes the first step with the decarboxylation of the alpha-ketoacid forming an enzyme-product intermediate. A reductive acylation mediated by the lipoylamide cofactor of E2 extracts the acyl group from the E1 active site for the next step of the reaction. In Homo sapiens (Human), this protein is 2-oxoisovalerate dehydrogenase subunit beta, mitochondrial.